A 526-amino-acid polypeptide reads, in one-letter code: Fumitremorgin C synthase (526 aa).

Residues 4-24 traverse the membrane as a helical segment; sequence LPLSPAVLFLIIVLPILYLWI. Residue C443 coordinates heme.

This sequence belongs to the cytochrome P450 family. Heme is required as a cofactor.

Its subcellular location is the membrane. It catalyses the reaction tryprostatin A + reduced [NADPH--hemoprotein reductase] + O2 = fumitremorgin C + oxidized [NADPH--hemoprotein reductase] + 2 H2O + H(+). Its pathway is mycotoxin biosynthesis. In terms of biological role, cytochrome P450 monooxygenase; part of the gene cluster that mediates the biosynthesis of fumitremorgins, indole alkaloids that carry not only intriguing chemical structures, but also interesting biological and pharmacological activities. The biosynthesis of fumitremorgin-type alkaloids begins by condensation of the two amino acids L-tryptophan and L-proline to brevianamide F, catalyzed by the non-ribosomal peptide synthetase ftmA. Brevianamide F is then prenylated by the prenyltransferase ftmPT1/ftmB in the presence of dimethylallyl diphosphate, resulting in the formation of tryprostatin B. The three cytochrome P450 monooxygenases, ftmP450-1/ftmC, ftmP450-2/ftmE and ftmP450-3/FtmG, are responsible for the conversion of tryprostatin B to 6-hydroxytryprostatin B, tryprostatin A to fumitremorgin C and fumitremorgin C to 12,13-dihydroxyfumitremorgin C, respectively. The putative methyltransferase ftmMT/ftmD is expected for the conversion of 6-hydroxytryprostatin B to tryprostatin A. FtmPT2/FtmH catalyzes the prenylation of 12,13-dihydroxyfumitre-morgin C in the presence of dimethylallyl diphosphate, resulting in the formation of fumitremorgin B. Fumitremorgin B is further converted to verruculogen by ftmOx1/ftmF via the insertion of an endoperoxide bond between the two prenyl moieties. In some fungal species, verruculogen is further converted to fumitremorgin A, but the enzymes involved in this step have not been identified yet. This chain is Fumitremorgin C synthase, found in Aspergillus fumigatus (Neosartorya fumigata).